Consider the following 626-residue polypeptide: Probable potassium transport system protein Kup (626 aa).

12 helical membrane passes run 11-31 (FLTLSAGALGVVYGDIGTSPL), 55-75 (LSLIFWALFIIVAVKYVVFVM), 103-123 (AWIISLGLFGTALFYGDGMIT), 140-160 (AALSHYVVPASILILLALFLI), 171-191 (LFGPIMLLWFLSIGTLGFVSL), 216-236 (LGFAALGAVVLAVTGAEALYA), 250-270 (WFAVVFPSLILNYLGQGALLI), 282-302 (LLVPEWALYPMIGLATAATVI), 340-360 (IYAPAVNRLLLISVLALVLAF), 369-389 (AYGLAVVGTMVVTTLLALVVA), 395-415 (WPGLALLVTGAVLLSVDLSFL), and 422-442 (LGDGGWIPLSLGLILATVMST).

The protein belongs to the HAK/KUP transporter (TC 2.A.72) family.

Its subcellular location is the cell inner membrane. The enzyme catalyses K(+)(in) + H(+)(in) = K(+)(out) + H(+)(out). Its function is as follows. Transport of potassium into the cell. Likely operates as a K(+):H(+) symporter. The sequence is that of Probable potassium transport system protein Kup from Methylococcus capsulatus (strain ATCC 33009 / NCIMB 11132 / Bath).